The sequence spans 201 residues: Guanylate kinase (201 aa).

Positions 2–180 (SCLFVISAPS…AARDVASIVQ (179 aa)) constitute a Guanylate kinase-like domain. Residue 9–16 (APSGAGKT) participates in ATP binding.

Belongs to the guanylate kinase family.

It localises to the cytoplasm. The enzyme catalyses GMP + ATP = GDP + ADP. In terms of biological role, essential for recycling GMP and indirectly, cGMP. In Nitrosomonas europaea (strain ATCC 19718 / CIP 103999 / KCTC 2705 / NBRC 14298), this protein is Guanylate kinase.